A 318-amino-acid chain; its full sequence is Methionyl-tRNA formyltransferase (318 aa).

Serine 112 to proline 115 is a (6S)-5,6,7,8-tetrahydrofolate binding site.

This sequence belongs to the Fmt family.

The enzyme catalyses L-methionyl-tRNA(fMet) + (6R)-10-formyltetrahydrofolate = N-formyl-L-methionyl-tRNA(fMet) + (6S)-5,6,7,8-tetrahydrofolate + H(+). In terms of biological role, attaches a formyl group to the free amino group of methionyl-tRNA(fMet). The formyl group appears to play a dual role in the initiator identity of N-formylmethionyl-tRNA by promoting its recognition by IF2 and preventing the misappropriation of this tRNA by the elongation apparatus. The polypeptide is Methionyl-tRNA formyltransferase (Shewanella baltica (strain OS223)).